A 347-amino-acid polypeptide reads, in one-letter code: Quinolinate synthase (347 aa).

Positions 47 and 68 each coordinate iminosuccinate. Residue C113 coordinates [4Fe-4S] cluster. Iminosuccinate is bound by residues 139 to 141 (YAN) and S156. C200 lines the [4Fe-4S] cluster pocket. Iminosuccinate contacts are provided by residues 226 to 228 (HPE) and T243. C297 contributes to the [4Fe-4S] cluster binding site.

It belongs to the quinolinate synthase family. Type 1 subfamily. The cofactor is [4Fe-4S] cluster.

It is found in the cytoplasm. It carries out the reaction iminosuccinate + dihydroxyacetone phosphate = quinolinate + phosphate + 2 H2O + H(+). It functions in the pathway cofactor biosynthesis; NAD(+) biosynthesis; quinolinate from iminoaspartate: step 1/1. Functionally, catalyzes the condensation of iminoaspartate with dihydroxyacetone phosphate to form quinolinate. The protein is Quinolinate synthase of Shigella flexneri.